A 253-amino-acid chain; its full sequence is Ubiquinone/menaquinone biosynthesis C-methyltransferase UbiE (253 aa).

Residues Thr76, Asp97, and 125-126 (NA) contribute to the S-adenosyl-L-methionine site.

This sequence belongs to the class I-like SAM-binding methyltransferase superfamily. MenG/UbiE family.

It carries out the reaction a 2-demethylmenaquinol + S-adenosyl-L-methionine = a menaquinol + S-adenosyl-L-homocysteine + H(+). It catalyses the reaction a 2-methoxy-6-(all-trans-polyprenyl)benzene-1,4-diol + S-adenosyl-L-methionine = a 5-methoxy-2-methyl-3-(all-trans-polyprenyl)benzene-1,4-diol + S-adenosyl-L-homocysteine + H(+). It participates in quinol/quinone metabolism; menaquinone biosynthesis; menaquinol from 1,4-dihydroxy-2-naphthoate: step 2/2. The protein operates within cofactor biosynthesis; ubiquinone biosynthesis. Methyltransferase required for the conversion of demethylmenaquinol (DMKH2) to menaquinol (MKH2) and the conversion of 2-polyprenyl-6-methoxy-1,4-benzoquinol (DDMQH2) to 2-polyprenyl-3-methyl-6-methoxy-1,4-benzoquinol (DMQH2). This Bradyrhizobium sp. (strain BTAi1 / ATCC BAA-1182) protein is Ubiquinone/menaquinone biosynthesis C-methyltransferase UbiE.